We begin with the raw amino-acid sequence, 150 residues long: Lymphotoxin-beta (150 aa).

The 149-residue stretch at 1–149 (AWITGQGLGW…GKTFFGAVMV (149 aa)) folds into the THD domain. Residue Asn128 is glycosylated (N-linked (GlcNAc...) asparagine).

This sequence belongs to the tumor necrosis factor family. Heterotrimer of either two LTB and one LTA subunits or (less prevalent) two LTA and one LTB subunits.

It is found in the membrane. Functionally, cytokine that binds to LTBR/TNFRSF3. May play a specific role in immune response regulation. Provides the membrane anchor for the attachment of the heterotrimeric complex to the cell surface. The chain is Lymphotoxin-beta (LTB) from Sus scrofa (Pig).